We begin with the raw amino-acid sequence, 317 residues long: MGQKPKIAIFGGGTGLSVLLRGLKHKPVDITAIVTVADDGGSSGRLRNELKIPPPGDIRNVLAALSDVEPLVEDLFQHRFNKGNDLTGHSLGNLILAAMTNITGDFFHAVTEMSKVLNVRGKVLPAANASVVLHAEMEDGRVVSGESTIPEYGQRIKRVFLTPEQIDPLPETIDVIREADLIIIGPGSLYTSILPNLLVPKIGEEVIKAPAKKVYICNVMTQPGETLHYTAADHVKALNQHMGCGFIDTILVNSEDIPDEIKRKYEMESARPVDFDIEELKAMGLEVIRDQIVTYKNDVIRHDTHKVASLLVDLLKE.

It belongs to the gluconeogenesis factor family.

It localises to the cytoplasm. Required for morphogenesis under gluconeogenic growth conditions. Required, in gluconeogenic growth conditions, for the correct localization of PBP1 and hence for displaying a normal rod shape. The polypeptide is Gluconeogenesis factor (mgfK) (Bacillus subtilis (strain 168)).